The chain runs to 110 residues: Neural hemoglobin (110 aa).

A Globin domain is found at 2-110 (VNWAAVVDDF…HAIDDILSHL (109 aa)). His70 is a binding site for heme.

Belongs to the globin family. As to quaternary structure, homotetramer. Self-associates in the deoxy state. Seems to dissociate upon oxygenation.

Its function is as follows. Acts as an oxygen store capable of sustaining neuronal activity in an anoxic environment for 5 to 30 minutes. The polypeptide is Neural hemoglobin (Cerebratulus lacteus (Milky ribbon worm)).